The following is a 151-amino-acid chain: RNA polymerase-binding transcription factor DksA (151 aa).

Zn(2+) contacts are provided by C114, C117, C135, and C138. The dksA C4-type zinc-finger motif lies at 114–138 (CNSCSVEIGIRRLEARPTADLCIDC).

This sequence belongs to the DksA family. As to quaternary structure, interacts directly with the RNA polymerase.

Its subcellular location is the cytoplasm. In terms of biological role, transcription factor that acts by binding directly to the RNA polymerase (RNAP). Required for negative regulation of rRNA expression and positive regulation of several amino acid biosynthesis promoters. Also required for regulation of fis expression. This is RNA polymerase-binding transcription factor DksA from Buchnera aphidicola subsp. Acyrthosiphon pisum (strain APS) (Acyrthosiphon pisum symbiotic bacterium).